Consider the following 196-residue polypeptide: uncharacterized protein (196 aa).

In terms of domain architecture, Bro-N spans 58-163 (HKFFDAIKDS…IILPNNYHKN (106 aa)).

This is an uncharacterized protein from Acanthamoeba polyphaga mimivirus (APMV).